The chain runs to 666 residues: MTLQSQSSHCLNVHSSMVRDIEKCEQKTKRDIEKKNTKSGGVRLNSRRLIHGRVAEKGTKSLPSLTQVTFEGEELKLKSGSHYFKSLDDAIDFFDYMVRSRPFYTAVDCNKVIGVFVRMNRPDVAISLYRKMEIRRIPLNIYSFNILIKCFCDCHKLSFSLSTFGKLTKLGFQPDVVTFNTLLHGLCLEDRISEALALFGYMVETGFLEAVALFDQMVEIGLTPVVITFNTLINGLCLEGRVLEAAALVNKMVGKGLHIDVVTYGTIVNGMCKMGDTKSALNLLSKMEETHIKPDVVIYSAIIDRLCKDGHHSDAQYLFSEMLEKGIAPNVFTYNCMIDGFCSFGRWSDAQRLLRDMIEREINPDVLTFNALISASVKEGKLFEAEKLCDEMLHRCIFPDTVTYNSMIYGFCKHNRFDDAKHMFDLMASPDVVTFNTIIDVYCRAKRVDEGMQLLREISRRGLVANTTTYNTLIHGFCEVDNLNAAQDLFQEMISHGVCPDTITCNILLYGFCENEKLEEALELFEVIQMSKIDLDTVAYNIIIHGMCKGSKVDEAWDLFCSLPIHGVEPDVQTYNVMISGFCGKSAISDANVLFHKMKDNGHEPDNSTYNTLIRGCLKAGEIDKSIELISEMRSNGFSGDAFTIKMVADLITDGRLDKSFSDMLS.

PPR repeat units follow at residues 105–139 (TAVD…RIPL), 140–174 (NIYS…GFQP), 175–209 (DVVT…GFLE), 225–259 (VVIT…GLHI), 260–294 (DVVT…HIKP), 295–329 (DVVI…GIAP), 330–364 (NVFT…EINP), 365–399 (DVLT…CIFP), 400–430 (DTVT…MASP), 431–465 (DVVT…GLVA), 466–500 (NTTT…GVCP), 501–535 (DTIT…KIDL), 536–570 (DTVA…GVEP), 571–605 (DVQT…GHEP), and 606–640 (DNST…GFSG).

This sequence belongs to the PPR family. P subfamily.

The sequence is that of Pentatricopeptide repeat-containing protein At1g64100 from Arabidopsis thaliana (Mouse-ear cress).